The following is a 299-amino-acid chain: Sulfotransferase 1B1 (299 aa).

Residue 48–53 (KSGTTW) participates in 3'-phosphoadenylyl sulfate binding. 107–109 (KTH) provides a ligand contact to substrate. His-109 acts as the Proton acceptor in catalysis. Residues Arg-131, Ser-139, Tyr-194, 228–233 (TSFEMM), and 258–260 (RKG) contribute to the 3'-phosphoadenylyl sulfate site.

The protein belongs to the sulfotransferase 1 family. As to expression, liver specific.

It localises to the cytoplasm. The enzyme catalyses a phenol + 3'-phosphoadenylyl sulfate = an aryl sulfate + adenosine 3',5'-bisphosphate + H(+). It catalyses the reaction 3,3',5-triiodo-L-thyronine + 3'-phosphoadenylyl sulfate = 3,3',5-triiodo-L-thyronine sulfate + adenosine 3',5'-bisphosphate + H(+). It carries out the reaction 3,3',5'-triiodo-L-thyronine + 3'-phosphoadenylyl sulfate = 3,3',5'-triiodo-L-thyronine sulfate + adenosine 3',5'-bisphosphate + H(+). The catalysed reaction is 3,3'-diiodo-L-thyronine + 3'-phosphoadenylyl sulfate = 3,3'-diiodo-L-thyronine sulfate + adenosine 3',5'-bisphosphate + H(+). The enzyme catalyses dopamine + 3'-phosphoadenylyl sulfate = dopamine 3-O-sulfate + adenosine 3',5'-bisphosphate + H(+). It catalyses the reaction dopamine + 3'-phosphoadenylyl sulfate = dopamine 4-O-sulfate + adenosine 3',5'-bisphosphate + H(+). It carries out the reaction 4-ethylphenol + 3'-phosphoadenylyl sulfate = 4-ethylphenyl sulfate + adenosine 3',5'-bisphosphate + H(+). Its function is as follows. Sulfotransferase that utilizes 3'-phospho-5'-adenylyl sulfate (PAPS) as sulfonate donor to catalyze the sulfate conjugation of dopamine, small phenols such as 1-naphthol and p-nitrophenol and thyroid hormones, including 3,3'-diiodothyronine, triidothyronine (T3) and reverse triiodothyronine (rT3). May play a role in gut microbiota-host metabolic interaction. O-sulfonates 4-ethylphenol (4-EP), a dietary tyrosine-derived metabolite produced by gut bacteria. The product 4-EPS crosses the blood-brain barrier and may negatively regulate oligodendrocyte maturation and myelination, affecting the functional connectivity of different brain regions associated with the limbic system. This Mus musculus (Mouse) protein is Sulfotransferase 1B1.